A 157-amino-acid polypeptide reads, in one-letter code: Crossover junction endodeoxyribonuclease RuvC (157 aa).

Residues Asp7, Glu67, and Asp140 contribute to the active site. The Mg(2+) site is built by Asp7, Glu67, and Asp140.

This sequence belongs to the RuvC family. Homodimer which binds Holliday junction (HJ) DNA. The HJ becomes 2-fold symmetrical on binding to RuvC with unstacked arms; it has a different conformation from HJ DNA in complex with RuvA. In the full resolvosome a probable DNA-RuvA(4)-RuvB(12)-RuvC(2) complex forms which resolves the HJ. The cofactor is Mg(2+).

The protein resides in the cytoplasm. The catalysed reaction is Endonucleolytic cleavage at a junction such as a reciprocal single-stranded crossover between two homologous DNA duplexes (Holliday junction).. In terms of biological role, the RuvA-RuvB-RuvC complex processes Holliday junction (HJ) DNA during genetic recombination and DNA repair. Endonuclease that resolves HJ intermediates. Cleaves cruciform DNA by making single-stranded nicks across the HJ at symmetrical positions within the homologous arms, yielding a 5'-phosphate and a 3'-hydroxyl group; requires a central core of homology in the junction. The consensus cleavage sequence is 5'-(A/T)TT(C/G)-3'. Cleavage occurs on the 3'-side of the TT dinucleotide at the point of strand exchange. HJ branch migration catalyzed by RuvA-RuvB allows RuvC to scan DNA until it finds its consensus sequence, where it cleaves and resolves the cruciform DNA. The chain is Crossover junction endodeoxyribonuclease RuvC from Rickettsia conorii (strain ATCC VR-613 / Malish 7).